The chain runs to 183 residues: MDIDPYKEFGASVELLSFLPSDFFPSIRDLLDTASALYREALESPEHCSPHHTALRQAILCWGELMNLATWVGSNLEDPASRELVVSYVNVNMGLKIRQLLWFHISCLTFGRETVLEYLVSFGVWIRTPPAYRPPNAPILSTLPETTVVRRRGRSPRRRTPSPRRRRSESPRRRRSQSRESQC.

The interval 136–183 (NAPILSTLPETTVVRRRGRSPRRRTPSPRRRRSESPRRRRSQSRESQC) is disordered. Residues 149–176 (VRRRGRSPRRRTPSPRRRRSESPRRRRS) show a composition bias toward basic residues. Phosphoserine; by host is present on residues Ser-155, Ser-162, and Ser-170. The stretch at 155 to 160 (SPRRRT) is one 1; half-length repeat. The 3 X 7 AA repeats of S-P-R-R-R-[PR]-S stretch occupies residues 155-176 (SPRRRTPSPRRRRSESPRRRRS). The Bipartite nuclear localization signal signature appears at 158–175 (RRTPSPRRRRSESPRRRR). 2 tandem repeats follow at residues 162–168 (SPRRRRS) and 170–176 (SPRRRRS). The RNA binding stretch occupies residues 177-183 (QSRESQC).

Belongs to the orthohepadnavirus core antigen family. As to quaternary structure, homodimerizes, then multimerizes. Interacts with cytosol exposed regions of viral L glycoprotein present in the reticulum-to-Golgi compartment. Interacts with human FLNB. Phosphorylated form interacts with host importin alpha; this interaction depends on the exposure of the NLS, which itself depends upon genome maturation and/or phosphorylation of the capsid protein. Interacts with host NUP153. Post-translationally, phosphorylated by host SRPK1, SRPK2, and maybe protein kinase C or GAPDH. Phosphorylation is critical for pregenomic RNA packaging. Protein kinase C phosphorylation is stimulated by HBx protein and may play a role in transport of the viral genome to the nucleus at the late step during the viral replication cycle.

Its subcellular location is the virion. It is found in the host cytoplasm. Its function is as follows. Self assembles to form an icosahedral capsid. Most capsids appear to be large particles with an icosahedral symmetry of T=4 and consist of 240 copies of capsid protein, though a fraction forms smaller T=3 particles consisting of 180 capsid proteins. Entering capsids are transported along microtubules to the nucleus. Phosphorylation of the capsid is thought to induce exposure of nuclear localization signal in the C-terminal portion of the capsid protein that allows binding to the nuclear pore complex via the importin (karyopherin-) alpha and beta. Capsids are imported in intact form through the nuclear pore into the nuclear basket, where it probably binds NUP153. Only capsids that contain the mature viral genome can release the viral DNA and capsid protein into the nucleoplasm. Immature capsids get stuck in the basket. Capsids encapsulate the pre-genomic RNA and the P protein. Pre-genomic RNA is reverse-transcribed into DNA while the capsid is still in the cytoplasm. The capsid can then either be directed to the nucleus, providing more genomes for transcription, or bud through the endoplasmic reticulum to provide new virions. The chain is Capsid protein from Homo sapiens (Human).